Reading from the N-terminus, the 111-residue chain is Distal membrane-arm assembly complex protein 1 (111 aa).

Residues 1–11 (MGSSFSGSTEF) are compositionally biased toward polar residues. Residues 1–40 (MGSSFSGSTEFSAPAPPTVSTAVPANPPAKSAVPASPARD) form a disordered region. Residues 18-38 (TVSTAVPANPPAKSAVPASPA) show a composition bias toward low complexity. Transmembrane regions (helical) follow at residues 51 to 68 (VLSG…YLVA) and 81 to 101 (GTVL…VVLV).

Interacts with incompletely assembled mitochondrial NADH:ubiquinone oxidoreductase complex (complex I).

The protein localises to the mitochondrion inner membrane. Its function is as follows. Required for the assembly of the mitochondrial NADH:ubiquinone oxidoreductase complex (complex I). Involved in the assembly of the distal region of complex I. This chain is Distal membrane-arm assembly complex protein 1, found in Mus musculus (Mouse).